A 636-amino-acid polypeptide reads, in one-letter code: Putative cysteine-rich receptor-like protein kinase 33 (636 aa).

A signal peptide spans 1–25 (MRKTKKISFLIFWVVLISIIGAISS). Gnk2-homologous domains lie at 26-128 (QQCN…NSSF) and 138-245 (YMEH…LYPF). Over 26 to 266 (QQCNETGYFE…PGSKRNISVG (241 aa)) the chain is Extracellular. N-linked (GlcNAc...) asparagine glycans are attached at residues Asn29, Asn63, Asn105, Asn125, Asn149, Asn173, Asn185, Asn188, Asn250, and Asn262. Residues 267-287 (FFVAIVVATGVVISVLSTLVV) form a helical membrane-spanning segment. Topologically, residues 288-636 (VLVCRKRKTD…DSLIDDLVPR (349 aa)) are cytoplasmic. The region spanning 321–600 (FSKCNMLGQG…MMLTSNSITL (280 aa)) is the Protein kinase domain. Residues 327 to 335 (LGQGGFGEV) and Lys349 contribute to the ATP site. Tyr394 carries the phosphotyrosine modification. Asp446 functions as the Proton acceptor in the catalytic mechanism. Residue Ser450 is modified to Phosphoserine. Thr486 carries the phosphothreonine modification. Residue Tyr494 is modified to Phosphotyrosine.

Belongs to the protein kinase superfamily. Ser/Thr protein kinase family. CRK subfamily.

The protein localises to the membrane. The catalysed reaction is L-seryl-[protein] + ATP = O-phospho-L-seryl-[protein] + ADP + H(+). It catalyses the reaction L-threonyl-[protein] + ATP = O-phospho-L-threonyl-[protein] + ADP + H(+). This chain is Putative cysteine-rich receptor-like protein kinase 33 (CRK33), found in Arabidopsis thaliana (Mouse-ear cress).